The following is a 269-amino-acid chain: Octanoyltransferase LipM (269 aa).

The region spanning 31–239 is the BPL/LPL catalytic domain; that stretch reads NHGAPVLRFY…GFSEGFEVNF (209 aa). The active-site Acyl-thioester intermediate is the cysteine 141.

The protein belongs to the octanoyltransferase LipM family. Monomer.

It catalyses the reaction octanoyl-[ACP] + L-lysyl-[protein] = N(6)-octanoyl-L-lysyl-[protein] + holo-[ACP] + H(+). It functions in the pathway protein modification; protein lipoylation via endogenous pathway; protein N(6)-(lipoyl)lysine from octanoyl-[acyl-carrier-protein]. Catalyzes the transfer of endogenously produced octanoic acid from octanoyl-acyl-carrier-protein onto the lipoyl domain of GcvH, an intermediate carrier during protein lipoylation. This chain is Octanoyltransferase LipM, found in Carboxydothermus hydrogenoformans (strain ATCC BAA-161 / DSM 6008 / Z-2901).